A 166-amino-acid polypeptide reads, in one-letter code: uncharacterized protein (166 aa).

This is an uncharacterized protein from Homo sapiens (Human).